Reading from the N-terminus, the 890-residue chain is Genome polyprotein 2 (890 aa).

The Peptidase C6 domain maps to 135-255 (AFNFAHGYCY…NSDLLNGIVG (121 aa)). Active-site for helper component proteinase activity residues include Cys143 and His215. The interval 506 to 533 (FTTSGDDDSPPPPGDSPSRPPGRSPDRV) is disordered. Over residues 515–528 (PPPPGDSPSRPPGR) the composition is skewed to pro residues. The stretch at 788-816 (ELVQRSMTKLDKEIELFQAQIDSQRRAVT) forms a coiled coil.

This sequence belongs to the bymoviruses polyprotein 2 family. In terms of processing, the viral RNA2 of bymoviruses is expressed as a single polyprotein which undergoes post-translational proteolytic processing resulting in the production of at least two individual proteins. The HC-pro cleaves its C-terminus autocatalytically (Potential).

The enzyme catalyses Hydrolyzes a Gly-|-Gly bond at its own C-terminus, commonly in the sequence -Tyr-Xaa-Val-Gly-|-Gly, in the processing of the potyviral polyprotein.. In Hordeum vulgare (Barley), this protein is Genome polyprotein 2.